The following is a 159-amino-acid chain: Regulatory protein RecX (159 aa).

This sequence belongs to the RecX family.

The protein localises to the cytoplasm. In terms of biological role, modulates RecA activity. The polypeptide is Regulatory protein RecX (Chlorobium limicola (strain DSM 245 / NBRC 103803 / 6330)).